Consider the following 611-residue polypeptide: Aspartate--tRNA(Asp/Asn) ligase (611 aa).

Glu177 contacts L-aspartate. The aspartate stretch occupies residues 201–204; the sequence is QLFK. An L-aspartate-binding site is contributed by Arg223. ATP-binding positions include 223–225 and Gln232; that span reads RDE. An L-aspartate-binding site is contributed by His461. Glu499 is an ATP binding site. Position 506 (Arg506) interacts with L-aspartate. 551 to 554 contacts ATP; the sequence is GVDR.

Belongs to the class-II aminoacyl-tRNA synthetase family. Type 1 subfamily. Homodimer.

It localises to the cytoplasm. It carries out the reaction tRNA(Asx) + L-aspartate + ATP = L-aspartyl-tRNA(Asx) + AMP + diphosphate. In terms of biological role, aspartyl-tRNA synthetase with relaxed tRNA specificity since it is able to aspartylate not only its cognate tRNA(Asp) but also tRNA(Asn). Reaction proceeds in two steps: L-aspartate is first activated by ATP to form Asp-AMP and then transferred to the acceptor end of tRNA(Asp/Asn). This chain is Aspartate--tRNA(Asp/Asn) ligase, found in Synechococcus sp. (strain WH7803).